We begin with the raw amino-acid sequence, 207 residues long: Outer-membrane lipoprotein LolB (207 aa).

The first 26 residues, 1–26 (MSKLKIDTKRRFSLLIALVLIISLSS), serve as a signal peptide directing secretion. Residue Cys-27 is the site of N-palmitoyl cysteine attachment. The S-diacylglycerol cysteine moiety is linked to residue Cys-27.

The protein belongs to the LolB family. Monomer.

It is found in the cell outer membrane. Plays a critical role in the incorporation of lipoproteins in the outer membrane after they are released by the LolA protein. This is Outer-membrane lipoprotein LolB from Francisella tularensis subsp. tularensis (strain WY96-3418).